The sequence spans 519 residues: F-box-like/WD repeat-containing protein TBL1XR1-A (519 aa).

In terms of domain architecture, LisH spans 4–36; that stretch reads SSDEVNFLVYRYLQESGFSHSAFTFGIESHISQ. The F-box-like domain maps to 41–86; sequence GALAPPAALISIIQKGLQYVEAEVSINEDGTLFDGRPIESLSLIDA. Residues 115–139 are compositionally biased toward low complexity; it reads AAAAAATPNNQQPPAKNGENTANGE. The interval 115-147 is disordered; it reads AAAAAATPNNQQPPAKNGENTANGEENGGHALA. 8 WD repeats span residues 172 to 211, 228 to 267, 269 to 308, 311 to 349, 352 to 391, 394 to 442, 445 to 484, and 486 to 519; these read GHES…TSGS, PSNK…ASTL, QHKG…AKQQ, FHSA…PIKT, GHTN…CVHD, AHNK…CIHT, KHQE…LVHS, and RGTG…DLRK.

It belongs to the WD repeat EBI family. Interacts with heterodimers of rxra and thrb, and this interaction is abrogated by thyroid hormone binding to thrb. Interacts with ncor1.

The protein resides in the nucleus. In terms of biological role, F-box-like protein which acts as an integral component of the N-CoR transcriptional corepressor complex. Probably regulates transcription activation mediated by nuclear receptors. May mediate the recruitment of the 19S proteasome complex, leading to the subsequent proteasomal degradation of the N-CoR complex, thereby allowing cofactor exchange and transcription activation. This Xenopus laevis (African clawed frog) protein is F-box-like/WD repeat-containing protein TBL1XR1-A (tbl1xr1-a).